A 500-amino-acid chain; its full sequence is L-arabinose isomerase (500 aa).

Mn(2+) is bound by residues Glu-306, Glu-333, His-350, and His-450.

It belongs to the arabinose isomerase family. Homohexamer. Requires Mn(2+) as cofactor.

It carries out the reaction beta-L-arabinopyranose = L-ribulose. Its pathway is carbohydrate degradation; L-arabinose degradation via L-ribulose; D-xylulose 5-phosphate from L-arabinose (bacterial route): step 1/3. In terms of biological role, catalyzes the conversion of L-arabinose to L-ribulose. The protein is L-arabinose isomerase of Escherichia coli O6:H1 (strain CFT073 / ATCC 700928 / UPEC).